The chain runs to 249 residues: ATP synthase subunits region ORF 6 (249 aa).

In Fuscovulum blasticum (Rhodobacter blasticus), this protein is ATP synthase subunits region ORF 6.